Here is a 601-residue protein sequence, read N- to C-terminus: Tubulin polyglutamylase ttll-4 (601 aa).

The segment covering 1–18 (MSSGYSSAPSVSHTSSDT) has biased composition (polar residues). A disordered region spans residues 1-37 (MSSGYSSAPSVSHTSSDTDLNRIDSYDDGAEETTDEQ). One can recognise a TTL domain in the interval 138 to 476 (QARLTWCHNS…YVPPSFDKLS (339 aa)). Residues Lys-254, 260–261 (RG), 282–285 (QHYI), and 295–297 (KFD) each bind ATP. A protein is bound at residue Arg-260. Arg-321 serves as a coordination point for L-glutamate. 342–343 (TN) lines the ATP pocket. L-glutamate-binding residues include Tyr-344, Ser-345, and Lys-362. Residues Asp-422, Glu-435, and Asn-437 each contribute to the Mg(2+) site. Lys-453 is a binding site for L-glutamate.

It belongs to the tubulin--tyrosine ligase family. Mg(2+) is required as a cofactor. As to expression, expressed in many sensory neurons in amphid.

The enzyme catalyses L-glutamyl-[protein] + L-glutamate + ATP = gamma-L-glutamyl-L-glutamyl-[protein] + ADP + phosphate + H(+). Monoglutamylase which modifies tubulin, adding a single glutamate on the gamma-carboxyl group of specific glutamate residues of target proteins. Involved in the side-chain initiation step of the polyglutamylation reaction but not in the elongation step. Preferentially modifies beta-tail tubulin over the alpha-tubulin. Involved in side-chain glutamylation of tubulin in sensory cilia. Together with ttll-5 and ttll-11, required for male mating. The chain is Tubulin polyglutamylase ttll-4 from Caenorhabditis elegans.